The sequence spans 446 residues: DNA repair protein RadA (446 aa).

The segment at 10–27 adopts a C4-type zinc-finger fold; the sequence is CSNCGNTSPKWSGQCFDC. 91–98 contributes to the ATP binding site; the sequence is GDPGIGKS. Positions 250–254 match the RadA KNRFG motif motif; it reads KNRFG. Positions 349 to 446 are lon-protease-like; it reads EVYLSIAGGL…HLKDLKEIIR (98 aa).

This sequence belongs to the RecA family. RadA subfamily.

Its function is as follows. DNA-dependent ATPase involved in processing of recombination intermediates, plays a role in repairing DNA breaks. Stimulates the branch migration of RecA-mediated strand transfer reactions, allowing the 3' invading strand to extend heteroduplex DNA faster. Binds ssDNA in the presence of ADP but not other nucleotides, has ATPase activity that is stimulated by ssDNA and various branched DNA structures, but inhibited by SSB. Does not have RecA's homology-searching function. The protein is DNA repair protein RadA of Rickettsia felis (strain ATCC VR-1525 / URRWXCal2) (Rickettsia azadi).